Reading from the N-terminus, the 205-residue chain is E3 ubiquitin-protein ligase complex slx8-rfp subunit rfp2 (205 aa).

The segment at 147-190 (CAKCGNELVSDEKKSIFAAKCGHLFCSTCAKELRKKTVPCPVQH) adopts an RING-type; degenerate zinc-finger fold.

As to quaternary structure, part of an E3 ubiquitin complex including rfp1, rfp2 and slx8. Interacts with slx8.

It localises to the nucleus. The enzyme catalyses S-ubiquitinyl-[E2 ubiquitin-conjugating enzyme]-L-cysteine + [acceptor protein]-L-lysine = [E2 ubiquitin-conjugating enzyme]-L-cysteine + N(6)-ubiquitinyl-[acceptor protein]-L-lysine.. Its pathway is protein modification; protein ubiquitination. Functionally, mediates ubiquitination and subsequent desumoylation/degradation of sumoylated proteins and proteins containing SUMO-like domains. Involved in maintaining genome stability where it acts in the cellular response to DNA damage. This Schizosaccharomyces pombe (strain 972 / ATCC 24843) (Fission yeast) protein is E3 ubiquitin-protein ligase complex slx8-rfp subunit rfp2 (rfp2).